A 372-amino-acid polypeptide reads, in one-letter code: Cytochrome b (372 aa).

A run of 4 helical transmembrane segments spans residues 25 to 45 (FGSMLLACLMLQIMTGFFLAI), 69 to 90 (WIMQNLHTISASLFFICIYTHI), 105 to 125 (WLSGTALLVTLMATAFFGYVL), and 170 to 190 (FFALHFILPFIIISLSSVHII). His-75 and His-89 together coordinate heme b. The heme b site is built by His-174 and His-188. A ubiquinone is bound at residue His-193. 4 helical membrane passes run 218 to 238 (YKDMLMITSMITLLLLILSFS), 280 to 300 (LGGTLALLLSVMILTTTPFTH), 312 to 332 (LSQILFWTLIATFITITWTAS), and 339 to 358 (FITISQTTSIFYFSFFILTP).

This sequence belongs to the cytochrome b family. In terms of assembly, the cytochrome bc1 complex contains 3 respiratory subunits (MT-CYB, CYC1 and UQCRFS1), 2 core proteins (UQCRC1 and UQCRC2) and probably 6 low-molecular weight proteins. Requires heme b as cofactor.

The protein resides in the mitochondrion inner membrane. Component of the ubiquinol-cytochrome c reductase complex (complex III or cytochrome b-c1 complex) that is part of the mitochondrial respiratory chain. The b-c1 complex mediates electron transfer from ubiquinol to cytochrome c. Contributes to the generation of a proton gradient across the mitochondrial membrane that is then used for ATP synthesis. This chain is Cytochrome b (MT-CYB), found in Naja kaouthia (Monocled cobra).